The chain runs to 448 residues: Exodeoxyribonuclease 7 large subunit (448 aa).

It belongs to the XseA family. Heterooligomer composed of large and small subunits.

The protein localises to the cytoplasm. The catalysed reaction is Exonucleolytic cleavage in either 5'- to 3'- or 3'- to 5'-direction to yield nucleoside 5'-phosphates.. In terms of biological role, bidirectionally degrades single-stranded DNA into large acid-insoluble oligonucleotides, which are then degraded further into small acid-soluble oligonucleotides. The sequence is that of Exodeoxyribonuclease 7 large subunit from Shewanella sp. (strain MR-7).